Reading from the N-terminus, the 220-residue chain is Casparian strip membrane protein 4 (220 aa).

A disordered region spans residues 1–39 (MDSRREVEESSTAPILESKRTRSNGKGKSIDGDHSPPHA). Residues 1 to 60 (MDSRREVEESSTAPILESKRTRSNGKGKSIDGDHSPPHAATVVTTKATPLQKGGMKKGIA) lie on the Cytoplasmic side of the membrane. A helical membrane pass occupies residues 61 to 81 (ILDFILRLGAIGAALGAAVIM). At 82 to 108 (GTNEQILPFFTQFLQFHAQWDDFPMFK) the chain is on the extracellular side. The helical transmembrane segment at 109-129 (FFVVANGAAAGFLILSLPFSI) threads the bilayer. At 130–141 (VCIVRPLAAGPR) the chain is on the cytoplasmic side. A helical transmembrane segment spans residues 142–162 (FLLVIVDLVLMALVVAAASSA). Residues 163-194 (AAVVYLAHNGSQDANWNAICQQFTDFCQGSSL) are Extracellular-facing. Asparagine 171 is a glycosylation site (N-linked (GlcNAc...) asparagine). The helical transmembrane segment at 195–215 (AVVASFVASVFLACLVVVSSV) threads the bilayer. At 216–220 (ALKRT) the chain is on the cytoplasmic side.

Belongs to the Casparian strip membrane proteins (CASP) family. As to quaternary structure, homodimer and heterodimers.

It localises to the cell membrane. Its function is as follows. Regulates membrane-cell wall junctions and localized cell wall deposition. Required for establishment of the Casparian strip membrane domain (CSD) and the subsequent formation of Casparian strips, a cell wall modification of the root endodermis that determines an apoplastic barrier between the intraorganismal apoplasm and the extraorganismal apoplasm and prevents lateral diffusion. This Medicago truncatula (Barrel medic) protein is Casparian strip membrane protein 4.